The chain runs to 531 residues: 2-isopropylmalate synthase (531 aa).

One can recognise a Pyruvate carboxyltransferase domain in the interval 8 to 284 (IIIFDTTLRD…LTNIDTKQIY (277 aa)). Mn(2+)-binding residues include Asp17, His208, His210, and Asn244. A regulatory domain region spans residues 408 to 531 (RVELVQVSCG…TQDKQTEVTA (124 aa)).

This sequence belongs to the alpha-IPM synthase/homocitrate synthase family. LeuA type 1 subfamily. As to quaternary structure, homodimer. It depends on Mn(2+) as a cofactor.

The protein localises to the cytoplasm. It catalyses the reaction 3-methyl-2-oxobutanoate + acetyl-CoA + H2O = (2S)-2-isopropylmalate + CoA + H(+). The protein operates within amino-acid biosynthesis; L-leucine biosynthesis; L-leucine from 3-methyl-2-oxobutanoate: step 1/4. Functionally, catalyzes the condensation of the acetyl group of acetyl-CoA with 3-methyl-2-oxobutanoate (2-ketoisovalerate) to form 3-carboxy-3-hydroxy-4-methylpentanoate (2-isopropylmalate). The chain is 2-isopropylmalate synthase from Trichormus variabilis (strain ATCC 29413 / PCC 7937) (Anabaena variabilis).